We begin with the raw amino-acid sequence, 367 residues long: Leucine-rich repeat-containing protein 28 (367 aa).

9 LRR repeats span residues 16–36 (KHKN…ELLK), 42–63 (HLER…LAQK), 66–87 (NLVE…IGSL), 89–111 (KLQC…GGLR), 112–133 (ALRH…VGDL), 135–156 (ELQT…LHLC), 158–180 (SLQY…CQLP), 181–202 (SLNE…LGRS), and 204–226 (ELQY…LYNK).

In Mus musculus (Mouse), this protein is Leucine-rich repeat-containing protein 28 (Lrrc28).